The chain runs to 253 residues: Sulfate transporter CysZ (253 aa).

4 helical membrane passes run 31–51 (FVILPLLVNILLMGGAFWWLF), 72–92 (LSYILWPLAVISVLLIFGYFF), 151–171 (IVLLILYFIPGVGQTVAPVLW), and 222–242 (IPVLNLFIMPVAVCGATAMWV).

Belongs to the CysZ family.

The protein resides in the cell inner membrane. Its function is as follows. High affinity, high specificity proton-dependent sulfate transporter, which mediates sulfate uptake. Provides the sulfur source for the cysteine synthesis pathway. The polypeptide is Sulfate transporter CysZ (Escherichia fergusonii (strain ATCC 35469 / DSM 13698 / CCUG 18766 / IAM 14443 / JCM 21226 / LMG 7866 / NBRC 102419 / NCTC 12128 / CDC 0568-73)).